Reading from the N-terminus, the 767-residue chain is Actin filament-associated protein 1-like 1 (767 aa).

Residues 83-97 (LRDMSDDGERSKEAS) are compositionally biased toward basic and acidic residues. Residues 83-145 (LRDMSDDGER…KSPEYISSHN (63 aa)) form a disordered region. Phosphoserine occurs at positions 87, 93, 97, 103, and 152. Residues 164–173 (SYPTTRMNGE) are compositionally biased toward polar residues. The segment at 164-210 (SYPTTRMNGESKSSYNDSDAMSSSYESYDEEEEEEKGRQPKHQWPSE) is disordered. Residues 174–189 (SKSSYNDSDAMSSSYE) show a composition bias toward low complexity. Positions 219 to 315 (DCRICAFLLR…WLKVIREVSR (97 aa)) constitute a PH 1 domain. 2 positions are modified to phosphoserine: Ser328 and Ser342. The tract at residues 341–381 (LSQEKQNSDSDSLGMNDSSSTLSRREACEHGKGKKNSLAEL) is disordered. A compositionally biased stretch (polar residues) spans 349 to 362 (DSDSLGMNDSSSTL). The PH 2 domain maps to 417 to 511 (EAPCCGYLNV…WLGLLLVEMG (95 aa)). Tyr556 is subject to Phosphotyrosine. The disordered stretch occupies residues 563–605 (KVQDEEPQRPTGAQVKRHASSCSEKSHRADPQVKVKRHASSAN). The segment covering 586 to 595 (EKSHRADPQV) has biased composition (basic and acidic residues). The stretch at 610-700 (GKNRAEEDAR…AVKERLQQSL (91 aa)) forms a coiled coil. Residues 704–767 (PALGLSVSSK…KAKEWEMKKT (64 aa)) are disordered. Residues 709 to 733 (SVSSKSKSQETTNKPQSSVPEQSLP) show a composition bias toward polar residues. The residue at position 746 (Ser746) is a Phosphoserine. The segment covering 758–767 (KAKEWEMKKT) has biased composition (basic and acidic residues).

Interacts with CTTN.

It is found in the cytoplasm. The protein resides in the cell projection. The protein localises to the podosome. It localises to the invadopodium. Its function is as follows. May be involved in podosome and invadosome formation. The sequence is that of Actin filament-associated protein 1-like 1 (Afap1l1) from Rattus norvegicus (Rat).